A 184-amino-acid chain; its full sequence is Large ribosomal subunit protein uL5 (184 aa).

This sequence belongs to the universal ribosomal protein uL5 family. In terms of assembly, part of the 50S ribosomal subunit; part of the 5S rRNA/L5/L18/L25 subcomplex. Contacts the 5S rRNA and the P site tRNA. Forms a bridge to the 30S subunit in the 70S ribosome.

This is one of the proteins that bind and probably mediate the attachment of the 5S RNA into the large ribosomal subunit, where it forms part of the central protuberance. In the 70S ribosome it contacts protein S13 of the 30S subunit (bridge B1b), connecting the 2 subunits; this bridge is implicated in subunit movement. Contacts the P site tRNA; the 5S rRNA and some of its associated proteins might help stabilize positioning of ribosome-bound tRNAs. In Wolinella succinogenes (strain ATCC 29543 / DSM 1740 / CCUG 13145 / JCM 31913 / LMG 7466 / NCTC 11488 / FDC 602W) (Vibrio succinogenes), this protein is Large ribosomal subunit protein uL5.